A 238-amino-acid chain; its full sequence is Pyridoxine 5'-phosphate synthase (238 aa).

Residues Asn7 and Arg18 each coordinate 3-amino-2-oxopropyl phosphate. The active-site Proton acceptor is His43. 1-deoxy-D-xylulose 5-phosphate is bound by residues Arg45 and His50. Glu70 serves as the catalytic Proton acceptor. Thr100 contributes to the 1-deoxy-D-xylulose 5-phosphate binding site. The active-site Proton donor is His190. 3-amino-2-oxopropyl phosphate contacts are provided by residues Asp191 and 213–214 (GH).

Belongs to the PNP synthase family. As to quaternary structure, homooctamer; tetramer of dimers.

Its subcellular location is the cytoplasm. It carries out the reaction 3-amino-2-oxopropyl phosphate + 1-deoxy-D-xylulose 5-phosphate = pyridoxine 5'-phosphate + phosphate + 2 H2O + H(+). The protein operates within cofactor biosynthesis; pyridoxine 5'-phosphate biosynthesis; pyridoxine 5'-phosphate from D-erythrose 4-phosphate: step 5/5. In terms of biological role, catalyzes the complicated ring closure reaction between the two acyclic compounds 1-deoxy-D-xylulose-5-phosphate (DXP) and 3-amino-2-oxopropyl phosphate (1-amino-acetone-3-phosphate or AAP) to form pyridoxine 5'-phosphate (PNP) and inorganic phosphate. The polypeptide is Pyridoxine 5'-phosphate synthase (Cytophaga hutchinsonii (strain ATCC 33406 / DSM 1761 / CIP 103989 / NBRC 15051 / NCIMB 9469 / D465)).